The sequence spans 143 residues: uncharacterized protein (143 aa).

It localises to the mitochondrion. This is an uncharacterized protein from Arabidopsis thaliana (Mouse-ear cress).